A 368-amino-acid polypeptide reads, in one-letter code: Quinolinate synthase (368 aa).

The iminosuccinate site is built by His46 and Ser63. Cys110 is a [4Fe-4S] cluster binding site. Iminosuccinate-binding positions include 141–143 (YVN) and Ser162. Cys230 serves as a coordination point for [4Fe-4S] cluster. Iminosuccinate is bound by residues 256 to 258 (HPE) and Thr273. Residue Cys320 participates in [4Fe-4S] cluster binding.

Belongs to the quinolinate synthase family. Type 3 subfamily. [4Fe-4S] cluster serves as cofactor.

It localises to the cytoplasm. It carries out the reaction iminosuccinate + dihydroxyacetone phosphate = quinolinate + phosphate + 2 H2O + H(+). Its pathway is cofactor biosynthesis; NAD(+) biosynthesis; quinolinate from iminoaspartate: step 1/1. Its function is as follows. Catalyzes the condensation of iminoaspartate with dihydroxyacetone phosphate to form quinolinate. In Bacillus cereus (strain ATCC 10987 / NRS 248), this protein is Quinolinate synthase.